The chain runs to 308 residues: Cis-prenyltransferase 4, chloroplastic (308 aa).

A chloroplast-targeting transit peptide spans 1–45; that stretch reads MAFSLQLQQIFVSYTRFCSQPKSITNPLISLKLPSIHPLAFAQNA. Residue aspartate 84 is part of the active site.

It belongs to the UPP synthase family. Mg(2+) is required as a cofactor. Widely expressed.

It localises to the plastid. The protein localises to the chloroplast. In terms of biological role, uses neryl diphosphate and geranyl diphosphate to catalyze the cis-prenyl chain elongation and produce polyprenyl diphosphate with a chain of 55 carbons. This is Cis-prenyltransferase 4, chloroplastic from Solanum lycopersicum (Tomato).